Consider the following 195-residue polypeptide: 3-hydroxyanthranilate 3,4-dioxygenase (195 aa).

Arg50 contacts O2. Residues His54, Glu60, and His102 each coordinate Fe cation. Residue Glu60 participates in substrate binding. Positions 106 and 116 each coordinate substrate. Residues Cys131, Cys136, Cys170, and Cys173 each contribute to the a divalent metal cation site.

This sequence belongs to the 3-HAO family. Requires Fe(2+) as cofactor.

It localises to the cytoplasm. It catalyses the reaction 3-hydroxyanthranilate + O2 = (2Z,4Z)-2-amino-3-carboxymuconate 6-semialdehyde. Its pathway is cofactor biosynthesis; NAD(+) biosynthesis; quinolinate from L-kynurenine: step 3/3. In terms of biological role, catalyzes the oxidative ring opening of 3-hydroxyanthranilate to 2-amino-3-carboxymuconate semialdehyde, which spontaneously cyclizes to quinolinate. This chain is 3-hydroxyanthranilate 3,4-dioxygenase (bna1), found in Aspergillus terreus (strain NIH 2624 / FGSC A1156).